The following is a 494-amino-acid chain: Putative glucuronosyltransferase PGSIP7 (494 aa).

The chain crosses the membrane as a helical span at residues 4-24 (QRTLMFSCWVLSLLIIKTTAY). Mn(2+)-binding residues include Asp-161 and Asp-163. The next 5 membrane-spanning stretches (helical) occupy residues 316-336 (YSAE…IILV), 362-382 (AFKF…FFII), 389-409 (LIGW…PINA), 410-430 (FLLP…TLLV), and 444-464 (LSVF…FVKI).

This sequence belongs to the glycosyltransferase 8 family. Glycogenin subfamily. Requires Mn(2+) as cofactor.

Its subcellular location is the membrane. In Arabidopsis thaliana (Mouse-ear cress), this protein is Putative glucuronosyltransferase PGSIP7 (PGSIP7).